Reading from the N-terminus, the 411-residue chain is Na(+)-translocating NADH-quinone reductase subunit B (411 aa).

3 helical membrane-spanning segments follow: residues 56–76 (IMITVWLCTFPAMFFGMYNAG), 121–141 (FLPIYLVTFAVGGFWEVLFAV), and 161–181 (ILPATIPLWQVALGITFGVVI). Residue Thr228 is modified to FMN phosphoryl threonine. 5 helical membrane-spanning segments follow: residues 254 to 274 (FIPGSVGETSTLAILIGAAVL), 284 to 304 (IMLGVFVGMALTAMLFTAIGS), 309 to 329 (MFGMPWYWHLVLGGFAFGMVF), 345 to 365 (LLFGFLIGVMTVLIRVVNPAF), and 368 to 388 (GIMLAILFANLFAPMIDHFFV).

Belongs to the NqrB/RnfD family. As to quaternary structure, composed of six subunits; NqrA, NqrB, NqrC, NqrD, NqrE and NqrF. FMN serves as cofactor.

The protein localises to the cell inner membrane. The catalysed reaction is a ubiquinone + n Na(+)(in) + NADH + H(+) = a ubiquinol + n Na(+)(out) + NAD(+). NQR complex catalyzes the reduction of ubiquinone-1 to ubiquinol by two successive reactions, coupled with the transport of Na(+) ions from the cytoplasm to the periplasm. NqrA to NqrE are probably involved in the second step, the conversion of ubisemiquinone to ubiquinol. This chain is Na(+)-translocating NADH-quinone reductase subunit B, found in Chromohalobacter salexigens (strain ATCC BAA-138 / DSM 3043 / CIP 106854 / NCIMB 13768 / 1H11).